The chain runs to 250 residues: 5-oxoprolinase subunit A (250 aa).

This sequence belongs to the LamB/PxpA family. Forms a complex composed of PxpA, PxpB and PxpC.

The catalysed reaction is 5-oxo-L-proline + ATP + 2 H2O = L-glutamate + ADP + phosphate + H(+). In terms of biological role, catalyzes the cleavage of 5-oxoproline to form L-glutamate coupled to the hydrolysis of ATP to ADP and inorganic phosphate. This chain is 5-oxoprolinase subunit A, found in Streptomyces avermitilis (strain ATCC 31267 / DSM 46492 / JCM 5070 / NBRC 14893 / NCIMB 12804 / NRRL 8165 / MA-4680).